A 360-amino-acid polypeptide reads, in one-letter code: RNA demethylase ALKBH5 (360 aa).

The disordered stretch occupies residues Met-1–Val-53. Over residues Asp-7 to Glu-22 the composition is skewed to basic and acidic residues. Positions Asp-32–Glu-48 are enriched in acidic residues. Tyr-107 is a catalytic residue. 2-oxoglutarate is bound by residues Asn-161, Tyr-163, His-172, His-234, and Arg-245. A disulfide bridge connects residues Cys-198 and Cys-235. The segment at Glu-261 to His-360 is disordered. Positions Ser-264–Gln-280 are enriched in polar residues. Positions His-281–Arg-290 are enriched in basic residues. 2 stretches are compositionally biased toward basic and acidic residues: residues Lys-291 to Arg-312 and Tyr-330 to Thr-340.

This sequence belongs to the alkB family. In terms of assembly, monomer. The cofactor is Fe(2+).

The protein resides in the nucleus speckle. It carries out the reaction an N(6)-methyladenosine in mRNA + 2-oxoglutarate + O2 = an adenosine in mRNA + formaldehyde + succinate + CO2. In terms of biological role, dioxygenase that specifically demethylates N(6)-methyladenosine (m6A) RNA, the most prevalent internal modification of messenger RNA (mRNA) in higher eukaryotes. Demethylates RNA by oxidative demethylation, which requires molecular oxygen, alpha-ketoglutarate and iron. Demethylation of m6A mRNA affects mRNA processing, translation and export. This Xenopus laevis (African clawed frog) protein is RNA demethylase ALKBH5 (alkbh5).